A 392-amino-acid chain; its full sequence is Formate-dependent phosphoribosylglycinamide formyltransferase (392 aa).

N(1)-(5-phospho-beta-D-ribosyl)glycinamide-binding positions include 22–23 (EL) and E82. Residues R114, K155, 160-165 (SSGKGQ), 195-198 (EGVV), and E203 each bind ATP. An ATP-grasp domain is found at 119-308 (RLAAEELQLP…EFALHVRAFL (190 aa)). Residues E267 and E279 each contribute to the Mg(2+) site. Residues D286, K355, and 362–363 (RR) each bind N(1)-(5-phospho-beta-D-ribosyl)glycinamide.

The protein belongs to the PurK/PurT family. As to quaternary structure, homodimer.

It carries out the reaction N(1)-(5-phospho-beta-D-ribosyl)glycinamide + formate + ATP = N(2)-formyl-N(1)-(5-phospho-beta-D-ribosyl)glycinamide + ADP + phosphate + H(+). It functions in the pathway purine metabolism; IMP biosynthesis via de novo pathway; N(2)-formyl-N(1)-(5-phospho-D-ribosyl)glycinamide from N(1)-(5-phospho-D-ribosyl)glycinamide (formate route): step 1/1. In terms of biological role, involved in the de novo purine biosynthesis. Catalyzes the transfer of formate to 5-phospho-ribosyl-glycinamide (GAR), producing 5-phospho-ribosyl-N-formylglycinamide (FGAR). Formate is provided by PurU via hydrolysis of 10-formyl-tetrahydrofolate. The chain is Formate-dependent phosphoribosylglycinamide formyltransferase from Escherichia coli O1:K1 / APEC.